Reading from the N-terminus, the 518-residue chain is U-box domain-containing protein 57 (518 aa).

A coiled-coil region spans residues 86–142 (EEVRKVHILEEEIVTLKHQADTYLVQKEKAVTAYDQLKHERDNAVQQVNELRDQSTH). Residues 159–409 (FKNAREVGDT…RPDLLNEVWI (251 aa)) enclose the Protein kinase domain. One can recognise a U-box domain in the interval 434-508 (SVPAAFICPI…HGYLQQQQPN (75 aa)).

The enzyme catalyses S-ubiquitinyl-[E2 ubiquitin-conjugating enzyme]-L-cysteine + [acceptor protein]-L-lysine = [E2 ubiquitin-conjugating enzyme]-L-cysteine + N(6)-ubiquitinyl-[acceptor protein]-L-lysine.. It functions in the pathway protein modification; protein ubiquitination. Possesses E3 ubiquitin-protein ligase in vitro. May be involved in cell death signaling. This chain is U-box domain-containing protein 57 (PUB57), found in Oryza sativa subsp. japonica (Rice).